The sequence spans 214 residues: Small ribosomal subunit protein uS5 (214 aa).

In terms of domain architecture, S5 DRBM spans 54 to 117 (LKYEVVDIKV…RDAKMNILPV (64 aa)).

This sequence belongs to the universal ribosomal protein uS5 family. Part of the 30S ribosomal subunit. Contacts protein S4.

Functionally, with S4 and S12 plays an important role in translational accuracy. In Saccharolobus islandicus (strain Y.N.15.51 / Yellowstone #2) (Sulfolobus islandicus), this protein is Small ribosomal subunit protein uS5.